The primary structure comprises 145 residues: Basic phospholipase A2 cL037 (145 aa).

The signal sequence occupies residues 1-21; sequence MYPAHLLVLLAVCVSLLGASA. A propeptide spanning residues 22–27 is cleaved from the precursor; sequence ILPLPL. Cystine bridges form between cysteine 38–cysteine 98, cysteine 54–cysteine 144, cysteine 56–cysteine 72, cysteine 71–cysteine 125, cysteine 78–cysteine 118, cysteine 87–cysteine 111, and cysteine 105–cysteine 116. Ca(2+) is bound by residues tyrosine 55, glycine 57, and glycine 59. Histidine 75 is a catalytic residue. Aspartate 76 is a binding site for Ca(2+). The active site involves aspartate 119.

Belongs to the phospholipase A2 family. Group I subfamily. D49 sub-subfamily. It depends on Ca(2+) as a cofactor. As to expression, expressed by the venom gland.

Its subcellular location is the secreted. It catalyses the reaction a 1,2-diacyl-sn-glycero-3-phosphocholine + H2O = a 1-acyl-sn-glycero-3-phosphocholine + a fatty acid + H(+). In terms of biological role, PLA2 catalyzes the calcium-dependent hydrolysis of the 2-acyl groups in 3-sn-phosphoglycerides. This Laticauda semifasciata (Black-banded sea krait) protein is Basic phospholipase A2 cL037.